Consider the following 279-residue polypeptide: Proteasome subunit beta (279 aa).

The propeptide at 1-51 (MTFDASGRLPEAFLTPGGSSFMDFLAGHAPDLLPGRRSLGTGDLSKDVPHG) is removed in mature form; by autocatalysis. Catalysis depends on T52, which acts as the Nucleophile.

It belongs to the peptidase T1B family. The 20S proteasome core is composed of 14 alpha and 14 beta subunits that assemble into four stacked heptameric rings, resulting in a barrel-shaped structure. The two inner rings, each composed of seven catalytic beta subunits, are sandwiched by two outer rings, each composed of seven alpha subunits. The catalytic chamber with the active sites is on the inside of the barrel. Has a gated structure, the ends of the cylinder being occluded by the N-termini of the alpha-subunits. Is capped by the proteasome-associated ATPase, ARC.

It is found in the cytoplasm. The catalysed reaction is Cleavage of peptide bonds with very broad specificity.. It participates in protein degradation; proteasomal Pup-dependent pathway. The formation of the proteasomal ATPase ARC-20S proteasome complex, likely via the docking of the C-termini of ARC into the intersubunit pockets in the alpha-rings, may trigger opening of the gate for substrate entry. Interconversion between the open-gate and close-gate conformations leads to a dynamic regulation of the 20S proteasome proteolysis activity. Functionally, component of the proteasome core, a large protease complex with broad specificity involved in protein degradation. The sequence is that of Proteasome subunit beta from Kribbella flavida (strain DSM 17836 / JCM 10339 / NBRC 14399).